Consider the following 479-residue polypeptide: Aspartyl/glutamyl-tRNA(Asn/Gln) amidotransferase subunit B (479 aa).

It belongs to the GatB/GatE family. GatB subfamily. In terms of assembly, heterotrimer of A, B and C subunits.

It catalyses the reaction L-glutamyl-tRNA(Gln) + L-glutamine + ATP + H2O = L-glutaminyl-tRNA(Gln) + L-glutamate + ADP + phosphate + H(+). The enzyme catalyses L-aspartyl-tRNA(Asn) + L-glutamine + ATP + H2O = L-asparaginyl-tRNA(Asn) + L-glutamate + ADP + phosphate + 2 H(+). Its function is as follows. Allows the formation of correctly charged Asn-tRNA(Asn) or Gln-tRNA(Gln) through the transamidation of misacylated Asp-tRNA(Asn) or Glu-tRNA(Gln) in organisms which lack either or both of asparaginyl-tRNA or glutaminyl-tRNA synthetases. The reaction takes place in the presence of glutamine and ATP through an activated phospho-Asp-tRNA(Asn) or phospho-Glu-tRNA(Gln). This Mycoplasma capricolum subsp. capricolum (strain California kid / ATCC 27343 / NCTC 10154) protein is Aspartyl/glutamyl-tRNA(Asn/Gln) amidotransferase subunit B.